A 301-amino-acid chain; its full sequence is tRNA pseudouridine synthase B (301 aa).

D38 functions as the Nucleophile in the catalytic mechanism.

This sequence belongs to the pseudouridine synthase TruB family. Type 1 subfamily.

The catalysed reaction is uridine(55) in tRNA = pseudouridine(55) in tRNA. Functionally, responsible for synthesis of pseudouridine from uracil-55 in the psi GC loop of transfer RNAs. The sequence is that of tRNA pseudouridine synthase B from Limosilactobacillus reuteri (strain DSM 20016) (Lactobacillus reuteri).